The following is a 215-amino-acid chain: Deoxyribose-phosphate aldolase (215 aa).

Residue aspartate 89 is the Proton donor/acceptor of the active site. Lysine 153 functions as the Schiff-base intermediate with acetaldehyde in the catalytic mechanism. The active-site Proton donor/acceptor is the lysine 182.

It belongs to the DeoC/FbaB aldolase family. DeoC type 1 subfamily.

The protein resides in the cytoplasm. The enzyme catalyses 2-deoxy-D-ribose 5-phosphate = D-glyceraldehyde 3-phosphate + acetaldehyde. Its pathway is carbohydrate degradation; 2-deoxy-D-ribose 1-phosphate degradation; D-glyceraldehyde 3-phosphate and acetaldehyde from 2-deoxy-alpha-D-ribose 1-phosphate: step 2/2. Its function is as follows. Catalyzes a reversible aldol reaction between acetaldehyde and D-glyceraldehyde 3-phosphate to generate 2-deoxy-D-ribose 5-phosphate. This Lactiplantibacillus plantarum (strain ATCC BAA-793 / NCIMB 8826 / WCFS1) (Lactobacillus plantarum) protein is Deoxyribose-phosphate aldolase.